The sequence spans 517 residues: 2-isopropylmalate synthase (517 aa).

The 263-residue stretch at 7-269 (VIIFDTTLRD…ETGIDTTQIV (263 aa)) folds into the Pyruvate carboxyltransferase domain. Mn(2+)-binding residues include Asp16, His204, His206, and Asn240. A regulatory domain region spans residues 395–517 (KFISQKISTE…KPKAQGSGTI (123 aa)).

This sequence belongs to the alpha-IPM synthase/homocitrate synthase family. LeuA type 1 subfamily. Homodimer. Mn(2+) is required as a cofactor.

The protein localises to the cytoplasm. The catalysed reaction is 3-methyl-2-oxobutanoate + acetyl-CoA + H2O = (2S)-2-isopropylmalate + CoA + H(+). The protein operates within amino-acid biosynthesis; L-leucine biosynthesis; L-leucine from 3-methyl-2-oxobutanoate: step 1/4. Its function is as follows. Catalyzes the condensation of the acetyl group of acetyl-CoA with 3-methyl-2-oxobutanoate (2-ketoisovalerate) to form 3-carboxy-3-hydroxy-4-methylpentanoate (2-isopropylmalate). In Neisseria meningitidis serogroup A / serotype 4A (strain DSM 15465 / Z2491), this protein is 2-isopropylmalate synthase.